The primary structure comprises 174 residues: Calcium-binding protein F (174 aa).

4 EF-hand domains span residues 9 to 44, 60 to 83, 92 to 127, and 133 to 162; these read KIFQ…KMDG, VDMD…EAKK, AALA…NGHT, and DQVL…RRID. Ca(2+)-binding residues include aspartate 22, asparagine 24, aspartate 26, serine 28, and aspartate 33. Ca(2+)-binding residues include aspartate 105, aspartate 107, aspartate 109, lysine 111, glutamate 116, aspartate 140, aspartate 142, aspartate 144, cysteine 146, and glutamate 151.

The sequence is that of Calcium-binding protein F (cbpF) from Dictyostelium discoideum (Social amoeba).